The primary structure comprises 1312 residues: DNA repair protein RAD50.L (1312 aa).

The ATP site is built by R13, N38, G39, G41, K42, T43, T44, V67, D69, and Q159. T43 contacts Mg(2+). Position 159 (Q159) interacts with Mg(2+). Coiled-coil stretches lie at residues V203–E342, L415–R558, and I587–K628. In terms of domain architecture, Zinc-hook spans S635–P734. 2 residues coordinate Zn(2+): C681 and C684. A coiled-coil region spans residues L712–N1070.

The protein belongs to the SMC family. RAD50 subfamily. Component of the MRN complex composed of two heterodimers RAD50 and MRE11 associated with a single NBN. Zn(2+) serves as cofactor.

It localises to the nucleus. The protein resides in the chromosome. The protein localises to the telomere. It carries out the reaction ATP + H2O = ADP + phosphate + H(+). Its function is as follows. Component of the MRN complex, which plays a central role in double-strand break (DSB) repair, DNA recombination, maintenance of telomere integrity and meiosis. The MRN complex is involved in the repair of DNA double-strand breaks (DSBs) via homologous recombination (HR), an error-free mechanism which primarily occurs during S and G2 phases. The complex (1) mediates the end resection of damaged DNA, which generates proper single-stranded DNA, a key initial steps in HR, and is (2) required for the recruitment of other repair factors and efficient activation of ATM and ATR upon DNA damage. The MRN complex possesses single-strand endonuclease activity and double-strand-specific 3'-5' exonuclease activity, which are provided by mre11, to initiate end resection, which is required for single-strand invasion and recombination. Within the complex, rad50 is both required to bind DNA ends and hold them in close proximity and regulate the activity of MRE11. Rad50 provides an ATP-dependent control of MRE11 by positioning DNA ends into the mre11 active site: ATP-binding induces a large structural change from an open form with accessible MRE11 nuclease sites into a closed form. The MRN complex is also required for DNA damage signaling via activation of the atm and atr kinases: the nuclease activity of mre11 is not required to activate ATM and ATR. The MRN complex promotes recruitment of topbp1 to DNA damage sites. The MRN complex and rbbp8/CtIP are also required for chromosome alignment during metaphase. This is DNA repair protein RAD50.L from Xenopus laevis (African clawed frog).